We begin with the raw amino-acid sequence, 257 residues long: Major prion protein (257 aa).

The N-terminal stretch at 1–24 (MVKSHIGSWLLVLFVATWSDIGFC) is a signal peptide. Residues 25–234 (KKRPKPGGGW…ESEAYYQRGA (210 aa)) are interaction with GRB2, ERI3 and SYN1. A disordered region spans residues 27–114 (RPKPGGGWNT…KPSKPKTNMK (88 aa)). Tandem repeats lie at residues 54-62 (PQGGGGWGQ), 63-70 (PHGGGWGQ), 71-78 (PHGGGWGQ), 79-86 (PHGGGWGQ), and 87-95 (PHGGGGWGQ). Residues 54–95 (PQGGGGWGQPHGGGWGQPHGGGWGQPHGGGWGQPHGGGGWGQ) are 5 X 8 AA tandem repeats of P-H-G-G-G-W-G-Q. The span at 55 to 101 (QGGGGWGQPHGGGWGQPHGGGWGQPHGGGWGQPHGGGGWGQGGGSHG) shows a compositional bias: gly residues. 12 residues coordinate Cu(2+): His-64, Gly-65, Gly-66, His-72, Gly-73, Gly-74, His-80, Gly-81, Gly-82, His-88, Gly-90, and Gly-91. Cys-183 and Cys-218 form a disulfide bridge. N-linked (GlcNAc...) asparagine glycosylation is found at Asn-185 and Asn-201. A lipid anchor (GPI-anchor amidated alanine) is attached at Ala-234. Positions 235–257 (SAILFSPPPVILLISLLILLIVG) are cleaved as a propeptide — removed in mature form.

The protein belongs to the prion family. Monomer and homodimer. Has a tendency to aggregate into amyloid fibrils containing a cross-beta spine, formed by a steric zipper of superposed beta-strands. Soluble oligomers may represent an intermediate stage on the path to fibril formation. Copper binding may promote oligomerization. Interacts with GRB2, APP, ERI3/PRNPIP and SYN1. Mislocalized cytosolically exposed PrP interacts with MGRN1; this interaction alters MGRN1 subcellular location and causes lysosomal enlargement. Interacts with KIAA1191.

It localises to the cell membrane. The protein resides in the golgi apparatus. Its function is as follows. Its primary physiological function is unclear. Has cytoprotective activity against internal or environmental stresses. May play a role in neuronal development and synaptic plasticity. May be required for neuronal myelin sheath maintenance. May play a role in iron uptake and iron homeostasis. Soluble oligomers are toxic to cultured neuroblastoma cells and induce apoptosis (in vitro). Association with GPC1 (via its heparan sulfate chains) targets PRNP to lipid rafts. Also provides Cu(2+) or Zn(2+) for the ascorbate-mediated GPC1 deaminase degradation of its heparan sulfate side chains. The protein is Major prion protein (PRNP) of Mustela putorius furo (European domestic ferret).